Reading from the N-terminus, the 307-residue chain is Aspartate carbamoyltransferase catalytic subunit (307 aa).

The carbamoyl phosphate site is built by R59 and T60. K87 contributes to the L-aspartate binding site. 3 residues coordinate carbamoyl phosphate: R109, H137, and Q140. Positions 173 and 223 each coordinate L-aspartate. Residues G266 and P267 each contribute to the carbamoyl phosphate site.

It belongs to the aspartate/ornithine carbamoyltransferase superfamily. ATCase family. As to quaternary structure, heterododecamer (2C3:3R2) of six catalytic PyrB chains organized as two trimers (C3), and six regulatory PyrI chains organized as three dimers (R2).

It catalyses the reaction carbamoyl phosphate + L-aspartate = N-carbamoyl-L-aspartate + phosphate + H(+). It functions in the pathway pyrimidine metabolism; UMP biosynthesis via de novo pathway; (S)-dihydroorotate from bicarbonate: step 2/3. Catalyzes the condensation of carbamoyl phosphate and aspartate to form carbamoyl aspartate and inorganic phosphate, the committed step in the de novo pyrimidine nucleotide biosynthesis pathway. In Helicobacter pylori (strain Shi470), this protein is Aspartate carbamoyltransferase catalytic subunit.